A 148-amino-acid polypeptide reads, in one-letter code: Cytochrome c oxidase subunit 4, mitochondrial (148 aa).

The N-terminal 24 residues, 1–24 (MFALRSIRSATKAFQTTSIVSQRG), are a transit peptide targeting the mitochondrion.

In terms of assembly, slime mold cytochrome c oxidase consists of at least seven different polypeptides species, subunits I, II, III, IV, V, VI, and VIIe/s in order of MW.

The protein resides in the mitochondrion inner membrane. It carries out the reaction 4 Fe(II)-[cytochrome c] + O2 + 8 H(+)(in) = 4 Fe(III)-[cytochrome c] + 2 H2O + 4 H(+)(out). This protein is one of the nuclear-coded polypeptide chains of cytochrome c oxidase, the terminal oxidase in mitochondrial electron transport. The protein is Cytochrome c oxidase subunit 4, mitochondrial (cxdA) of Dictyostelium discoideum (Social amoeba).